Consider the following 55-residue polypeptide: uncharacterized protein (55 aa).

Positions 1-19 (MQILLVVRLVLLWLGGLSA) are cleaved as a signal peptide.

This is an uncharacterized protein from Orgyia pseudotsugata multicapsid polyhedrosis virus (OpMNPV).